Consider the following 910-residue polypeptide: Protein translocase subunit SecA (910 aa).

Residues Gln87, 105-109 (GEGKT), and Asp508 contribute to the ATP site. Positions 558–568 (RHESRRIDNQL) are enriched in basic and acidic residues. 2 disordered regions span residues 558–580 (RHES…DPGS) and 873–910 (AAQQ…GQLS). Zn(2+) is bound by residues Cys894, Cys896, Cys905, and His906. Basic residues predominate over residues 900–910 (KKYKHCHGQLS).

Belongs to the SecA family. Monomer and homodimer. Part of the essential Sec protein translocation apparatus which comprises SecA, SecYEG and auxiliary proteins SecDF-YajC and YidC. It depends on Zn(2+) as a cofactor.

Its subcellular location is the cell inner membrane. The protein localises to the cytoplasm. The catalysed reaction is ATP + H2O + cellular proteinSide 1 = ADP + phosphate + cellular proteinSide 2.. Part of the Sec protein translocase complex. Interacts with the SecYEG preprotein conducting channel. Has a central role in coupling the hydrolysis of ATP to the transfer of proteins into and across the cell membrane, serving both as a receptor for the preprotein-SecB complex and as an ATP-driven molecular motor driving the stepwise translocation of polypeptide chains across the membrane. This Stenotrophomonas maltophilia (strain R551-3) protein is Protein translocase subunit SecA.